The following is a 391-amino-acid chain: MFSHKFICGSLTKMTETGITFDPPVYEQRYCATIQILEDARWKDQIKKVVEFGCAEMRFFQLMRRIETIEHIGLVDIDKSLLMRNLTSVNPLVSDYIRSRASPLKVQILQGNVADSSEELRDTDAVIAIELIEHVYDDVLAKIPVNIFGFMQPKLVVFSTPNSDFNVIFTRFNPLLPNGFRHEDHKFEWSRDEFKNWCLGIVEKYPNYMFSLTGVGNPPKEYESVGPVSQIAIFVRKDMLEMQLVNPLVSKPNIDKESIPYKLIHTVEYPFYVDTRTEKEKLWTEVQIELQRFKRQFESSEIEEGTYQDTCNMPIAFLLDRLEHVGATKERIEELLLENNLTVENECVLIVSSDQESEWSDPYKFSDRSSQDDALVDQEQEEERWDQGPES.

D76 contacts S-adenosyl-L-methionine. The Mg(2+) site is built by E130, E133, H134, and H185. A disordered region spans residues 354 to 391 (DQESEWSDPYKFSDRSSQDDALVDQEQEEERWDQGPES). Residues 374–384 (ALVDQEQEEER) show a composition bias toward acidic residues.

The protein belongs to the methyltransferase superfamily. HEN1 family. It depends on Mg(2+) as a cofactor.

The catalysed reaction is small RNA 3'-end nucleotide + S-adenosyl-L-methionine = small RNA 3'-end 2'-O-methylnucleotide + S-adenosyl-L-homocysteine + H(+). In terms of biological role, methyltransferase that adds a 2'-O-methyl group at the 3'-end of selected small RNAs. Mediates 2'-O-methylation of piRNAs, single-stranded siRNAs and long hairpin RNA genes (hpRNAs). Methylation protects the 3'-end of small RNAs from tailing and trimming and could constitute a recognition signal for appropriate argonaute machineries. This Drosophila melanogaster (Fruit fly) protein is Small RNA 2'-O-methyltransferase (Hen1).